The following is a 421-amino-acid chain: D-amino acid dehydrogenase (421 aa).

3 to 17 (ILILGSGVVGTASAY) provides a ligand contact to FAD.

This sequence belongs to the DadA oxidoreductase family. Requires FAD as cofactor.

It catalyses the reaction a D-alpha-amino acid + A + H2O = a 2-oxocarboxylate + AH2 + NH4(+). Its pathway is amino-acid degradation; D-alanine degradation; NH(3) and pyruvate from D-alanine: step 1/1. Functionally, oxidative deamination of D-amino acids. The sequence is that of D-amino acid dehydrogenase from Xanthobacter autotrophicus (strain ATCC BAA-1158 / Py2).